The primary structure comprises 187 residues: UPF0301 protein WIGBR1650 (187 aa).

The protein belongs to the UPF0301 (AlgH) family.

The sequence is that of UPF0301 protein WIGBR1650 from Wigglesworthia glossinidia brevipalpis.